Consider the following 835-residue polypeptide: Ribonucleoside-diphosphate reductase large subunit (835 aa).

Substrate contacts are provided by residues serine 222, 237-238, glycine 266, 447-451, and 660-664; these read SC, NLCCE, and PSASS. The cysteines at positions 238 and 464 are disulfide-linked. The Proton acceptor role is filled by asparagine 447. Catalysis depends on cysteine 449, which acts as the Cysteine radical intermediate. The active-site Proton acceptor is the glutamate 451.

The protein belongs to the ribonucleoside diphosphate reductase large chain family. As to quaternary structure, heterotetramer composed of a homodimer of the large subunit (R1) and a homodimer of the small subunit (R2). Larger multisubunit protein complex are also active, composed of (R1)n(R2)n.

The catalysed reaction is a 2'-deoxyribonucleoside 5'-diphosphate + [thioredoxin]-disulfide + H2O = a ribonucleoside 5'-diphosphate + [thioredoxin]-dithiol. Its function is as follows. Ribonucleoside-diphosphate reductase holoenzyme provides the precursors necessary for viral DNA synthesis. Allows virus growth in non-dividing cells. Catalyzes the biosynthesis of deoxyribonucleotides from the corresponding ribonucleotides. This chain is Ribonucleoside-diphosphate reductase large subunit, found in Magallana gigas (Pacific oyster).